The primary structure comprises 352 residues: 4-hydroxy-3-methylbut-2-en-1-yl diphosphate synthase (flavodoxin) (352 aa).

4 residues coordinate [4Fe-4S] cluster: cysteine 262, cysteine 265, cysteine 297, and glutamate 304.

It belongs to the IspG family. It depends on [4Fe-4S] cluster as a cofactor.

The catalysed reaction is (2E)-4-hydroxy-3-methylbut-2-enyl diphosphate + oxidized [flavodoxin] + H2O + 2 H(+) = 2-C-methyl-D-erythritol 2,4-cyclic diphosphate + reduced [flavodoxin]. Its pathway is isoprenoid biosynthesis; isopentenyl diphosphate biosynthesis via DXP pathway; isopentenyl diphosphate from 1-deoxy-D-xylulose 5-phosphate: step 5/6. Its function is as follows. Converts 2C-methyl-D-erythritol 2,4-cyclodiphosphate (ME-2,4cPP) into 1-hydroxy-2-methyl-2-(E)-butenyl 4-diphosphate. The chain is 4-hydroxy-3-methylbut-2-en-1-yl diphosphate synthase (flavodoxin) from Nitratiruptor sp. (strain SB155-2).